The sequence spans 122 residues: Large ribosomal subunit protein uL18 (122 aa).

This sequence belongs to the universal ribosomal protein uL18 family. In terms of assembly, part of the 50S ribosomal subunit; part of the 5S rRNA/L5/L18/L25 subcomplex. Contacts the 5S and 23S rRNAs.

In terms of biological role, this is one of the proteins that bind and probably mediate the attachment of the 5S RNA into the large ribosomal subunit, where it forms part of the central protuberance. The sequence is that of Large ribosomal subunit protein uL18 from Dictyoglomus turgidum (strain DSM 6724 / Z-1310).